We begin with the raw amino-acid sequence, 775 residues long: Serine/threonine-protein kinase ppk6 (775 aa).

Ser-132 and Ser-134 each carry phosphoserine. One can recognise a Protein kinase domain in the interval 503 to 758; sequence YTTIKELGIG…IEETLQHHWF (256 aa). Residues 509-517 and Lys-533 contribute to the ATP site; that span reads LGIGAYGQV. Asp-636 acts as the Proton acceptor in catalysis.

The protein belongs to the protein kinase superfamily. Ser/Thr protein kinase family.

It localises to the cytoplasm. It is found in the nucleus. The catalysed reaction is L-seryl-[protein] + ATP = O-phospho-L-seryl-[protein] + ADP + H(+). The enzyme catalyses L-threonyl-[protein] + ATP = O-phospho-L-threonyl-[protein] + ADP + H(+). The chain is Serine/threonine-protein kinase ppk6 (ppk6) from Schizosaccharomyces pombe (strain 972 / ATCC 24843) (Fission yeast).